The sequence spans 170 residues: Lipoprotein signal peptidase (170 aa).

A run of 4 helical transmembrane segments spans residues 11–31 (LGWL…KAHF), 41–61 (IVVI…AAFS), 69–89 (WQRW…VVWL), and 95–115 (DDTW…GNLY). Catalysis depends on residues Asp125 and Asp144. Residues 136–156 (YFPAFNFADSAITVGAIMLAL) traverse the membrane as a helical segment.

The protein belongs to the peptidase A8 family.

It is found in the cell inner membrane. The enzyme catalyses Release of signal peptides from bacterial membrane prolipoproteins. Hydrolyzes -Xaa-Yaa-Zaa-|-(S,diacylglyceryl)Cys-, in which Xaa is hydrophobic (preferably Leu), and Yaa (Ala or Ser) and Zaa (Gly or Ala) have small, neutral side chains.. It functions in the pathway protein modification; lipoprotein biosynthesis (signal peptide cleavage). In terms of biological role, this protein specifically catalyzes the removal of signal peptides from prolipoproteins. The chain is Lipoprotein signal peptidase from Pseudomonas fluorescens.